A 227-amino-acid polypeptide reads, in one-letter code: Calcium-binding protein 1 (227 aa).

Residue glycine 2 is the site of N-myristoyl glycine attachment. Residue cysteine 4 is the site of S-palmitoyl cysteine attachment. 4 EF-hand domains span residues 82–117 (EEIE…MGYM), 136–153 (GHVD…KLLA), 159–194 (IGVK…LLGH), and 196–227 (VGHR…MMSR). Ca(2+)-binding residues include aspartate 95, aspartate 97, aspartate 99, tyrosine 101, and aspartate 106. Ca(2+) is bound by residues aspartate 172, asparagine 174, aspartate 176, and glutamate 178. Phosphoserine is present on serine 180. Glutamate 183, aspartate 209, asparagine 211, aspartate 213, arginine 215, and glutamate 220 together coordinate Ca(2+).

Homodimer; when bound to calcium or magnesium. Interacts (via C-terminus) with ITPR1, ITPR2 and ITPR3. This binding is calcium dependent and the interaction correlates with calcium concentration. An additional calcium-independent interaction with the N-terminus of ITPR1 results in a decreased InsP(3) binding to the receptor. Interacts with CACNA1A (via C-terminal CDB motif) in the pre- and postsynaptic membranes. Interacts with CACNA1D and CACNA1C (via C-terminal C and IQ motifs). The binding to the C motif is calcium independent whereas the binding to IQ requires the presence of calcium and is mutually exclusive with calmodulin binding. Interacts with TRPC5 (via C-terminus). Interacts (via EF-hands 1 and 2) at microtubules with MAP1LC3B. Interacts with MYO1C. Interacts (via EF-hands 1 and 2) with NSMF (via the central NLS-containing motif region), the interaction occurs in a calcium dependent manner after synaptic NMDA receptor stimulation and prevents nuclear import of NSMF. Interacts with SPACA9 homolog. In terms of processing, phosphorylated. The phosphorylation regulates the activity. In terms of tissue distribution, expressed in the inner retina, specifically in amacrine cells and in cone OFF-bipolar cells (at protein level).

Its function is as follows. Modulates calcium-dependent activity of inositol 1,4,5-triphosphate receptors (ITPRs). Inhibits agonist-induced intracellular calcium signaling. Enhances inactivation and does not support calcium-dependent facilitation of voltage-dependent P/Q-type calcium channels. Causes calcium-dependent facilitation and inhibits inactivation of L-type calcium channels by binding to the same sites as calmodulin in the C-terminal domain of CACNA1C, but has an opposite effect on channel function. Suppresses the calcium-dependent inactivation of CACNA1D. Inhibits TRPC5 channels. Prevents NMDA receptor-induced cellular degeneration. Required for the normal transfer of light signals through the retina. The sequence is that of Calcium-binding protein 1 (Cabp1) from Mus musculus (Mouse).